The primary structure comprises 227 residues: Nitrobenzene nitroreductase (227 aa).

An FMN-binding site is contributed by 14-18; that stretch reads RRAKR. Positions 44 and 109 each coordinate NADP(+). Residues 172 to 173 and lysine 215 contribute to the FMN site; that span reads VF.

Belongs to the nitroreductase family. As to quaternary structure, monomer. Requires FMN as cofactor.

The catalysed reaction is N-phenylhydroxylamine + 2 NADP(+) + H2O = nitrobenzene + 2 NADPH + 2 H(+). The protein operates within xenobiotic degradation; nitrobenzene degradation. With respect to regulation, inhibited by dicumarol, p-hydroxymercuribenzoate and salicyl hydroxamate. Functionally, involved in the biodegradation of nitroaromatic compounds. Catalyzes the two-electron reduction of nitrobenzene (NB) to produce a nitrosobenzene (NOB) intermediate, which is immediately reduced to hydroxylaminobenzene (HAB) by a second two-electron transfer. Also active on menadione and nitrofurazone. Replacing NADPH with NADH results in a 4-fold decrease in the reaction rate. This is Nitrobenzene nitroreductase from Ectopseudomonas oleovorans (Pseudomonas oleovorans).